Reading from the N-terminus, the 435-residue chain is Zinc finger CCCH domain-containing protein 10 (435 aa).

Positions 1–36 are disordered; it reads MPDRDSYANGTGSSGGGPGGGGSEEASGAGTGSGGA. Over residues 12–35 the composition is skewed to gly residues; sequence GSSGGGPGGGGSEEASGAGTGSGG. 3 consecutive C3H1-type zinc fingers follow at residues 36-63, 73-99, and 134-161; these read ATSD…HPDM, KNEF…HGSK, and KEEV…HLQR. The interval 166–190 is disordered; the sequence is DARGGGGTGGGGSTGSAPPGRRHDL. Residues 168–179 show a composition bias toward gly residues; that stretch reads RGGGGTGGGGST. 2 positions are modified to omega-N-methylarginine: arginine 186 and arginine 187. Residues 235-281 adopt a coiled-coil conformation; the sequence is GVECRLLEEENALLRKRVEELKKQVSNLLATNEVLLEQNAQFRNQAK. Residues 315-331 are compositionally biased toward polar residues; it reads TTLSSQALQPRPVSQQE. The interval 315–363 is disordered; the sequence is TTLSSQALQPRPVSQQELVAPTGAPAAPPTNAAPPAAPPPPPPHLNPEI. A compositionally biased stretch (pro residues) spans 340-359; the sequence is AAPPTNAAPPAAPPPPPPHL.

It is found in the nucleus. In terms of biological role, specific regulator of miRNA biogenesis. Binds, via the C3H1-type zinc finger domains, to the binding motif 5'-GCAGCGC-3' on microRNA pri-MIR143 and negatively regulates the processing to mature microRNA. The chain is Zinc finger CCCH domain-containing protein 10 (Zc3h10) from Mus musculus (Mouse).